The primary structure comprises 414 residues: Mannan endo-1,4-beta-mannosidase 3 (414 aa).

Positions 1–19 (MKCLCFVVLLAILIAQNSS) are cleaved as a signal peptide. N-linked (GlcNAc...) asparagine glycosylation is found at asparagine 17 and asparagine 75. A substrate-binding site is contributed by tryptophan 87. 2 N-linked (GlcNAc...) asparagine glycosylation sites follow: asparagine 133 and asparagine 153. Residue asparagine 202 participates in substrate binding. Residue glutamate 203 is the Proton donor of the active site. Substrate is bound at residue tyrosine 283. Glutamate 323 serves as the catalytic Nucleophile. Residue asparagine 343 is glycosylated (N-linked (GlcNAc...) asparagine). Substrate is bound at residue tryptophan 365. Residue asparagine 386 is glycosylated (N-linked (GlcNAc...) asparagine).

Belongs to the glycosyl hydrolase 5 (cellulase A) family. Expressed in leaves, flowers, siliques and seeds.

Its subcellular location is the secreted. It carries out the reaction Random hydrolysis of (1-&gt;4)-beta-D-mannosidic linkages in mannans, galactomannans and glucomannans.. The protein is Mannan endo-1,4-beta-mannosidase 3 (MAN3) of Arabidopsis thaliana (Mouse-ear cress).